The following is a 372-amino-acid chain: Putative glutamate--cysteine ligase 2 (372 aa).

Belongs to the glutamate--cysteine ligase type 2 family. YbdK subfamily. Homodimer.

It catalyses the reaction L-cysteine + L-glutamate + ATP = gamma-L-glutamyl-L-cysteine + ADP + phosphate + H(+). Functionally, ATP-dependent carboxylate-amine ligase which exhibits weak glutamate--cysteine ligase activity. In Salmonella paratyphi A (strain AKU_12601), this protein is Putative glutamate--cysteine ligase 2 (ybdK).